The primary structure comprises 216 residues: ATP phosphoribosyltransferase (216 aa).

This sequence belongs to the ATP phosphoribosyltransferase family. Short subfamily. In terms of assembly, heteromultimer composed of HisG and HisZ subunits.

It localises to the cytoplasm. It carries out the reaction 1-(5-phospho-beta-D-ribosyl)-ATP + diphosphate = 5-phospho-alpha-D-ribose 1-diphosphate + ATP. The protein operates within amino-acid biosynthesis; L-histidine biosynthesis; L-histidine from 5-phospho-alpha-D-ribose 1-diphosphate: step 1/9. Its function is as follows. Catalyzes the condensation of ATP and 5-phosphoribose 1-diphosphate to form N'-(5'-phosphoribosyl)-ATP (PR-ATP). Has a crucial role in the pathway because the rate of histidine biosynthesis seems to be controlled primarily by regulation of HisG enzymatic activity. This chain is ATP phosphoribosyltransferase, found in Rubrobacter xylanophilus (strain DSM 9941 / JCM 11954 / NBRC 16129 / PRD-1).